We begin with the raw amino-acid sequence, 381 residues long: Dual specificity protein phosphatase 6 (381 aa).

A Rhodanese domain is found at 30–148 (GNERLLLMDC…FQAEFSLHCE (119 aa)). A disordered region spans residues 176–203 (SSSDIESDLDRDPNSATDSDGSPLSNSQ). The span at 189–203 (NSATDSDGSPLSNSQ) shows a compositional bias: polar residues. In terms of domain architecture, Tyrosine-protein phosphatase spans 206 to 349 (FPVEILPFLY…LLDFERTLGL (144 aa)). The Phosphocysteine intermediate role is filled by cysteine 293.

It belongs to the protein-tyrosine phosphatase family. Non-receptor class dual specificity subfamily. Interacts with MAPK1/ERK2. Post-translationally, ubiquitinated by the SCF(FBXO31) complex, leading to its proteasomal degradation. In terms of tissue distribution, expressed in keratinocytes (at protein level).

The protein resides in the cytoplasm. It carries out the reaction O-phospho-L-tyrosyl-[protein] + H2O = L-tyrosyl-[protein] + phosphate. It catalyses the reaction O-phospho-L-seryl-[protein] + H2O = L-seryl-[protein] + phosphate. The catalysed reaction is O-phospho-L-threonyl-[protein] + H2O = L-threonyl-[protein] + phosphate. Functionally, dual specificity protein phosphatase, which mediates dephosphorylation and inactivation of MAP kinases. Has a specificity for the ERK family. Plays an important role in alleviating chronic postoperative pain. Necessary for the normal dephosphorylation of the long-lasting phosphorylated forms of spinal MAPK1/3 and MAP kinase p38 induced by peripheral surgery, which drives the resolution of acute postoperative allodynia. Also important for dephosphorylation of MAPK1/3 in local wound tissue, which further contributes to resolution of acute pain. Promotes cell differentiation by regulating MAPK1/MAPK3 activity and regulating the expression of AP1 transcription factors. In Homo sapiens (Human), this protein is Dual specificity protein phosphatase 6 (DUSP6).